A 242-amino-acid chain; its full sequence is Platelet-derived growth factor subunit B (242 aa).

Residues 1 to 20 (MNRCWALFLSLCCYLRLVSA) form the signal peptide. A propeptide spans 21 to 81 (EGDPIPEELY…ELESLSRGRR (61 aa)) (removed in mature form). Asn-63 carries N-linked (GlcNAc...) asparagine glycosylation. 3 disulfide bridges follow: Cys-97–Cys-141, Cys-130–Cys-178, and Cys-134–Cys-180. Residues 219 to 232 (PPKGKHRKFKHTHD) show a composition bias toward basic residues. Residues 219–242 (PPKGKHRKFKHTHDKKALKETLGA) form a disordered region. Residues 233-242 (KKALKETLGA) are compositionally biased toward basic and acidic residues.

It belongs to the PDGF/VEGF growth factor family. Antiparallel homodimer; disulfide-linked. Antiparallel heterodimer with PDGFA; disulfide-linked. The PDGFB homodimer interacts with PDGFRA and PDGFRB homodimers, and with heterodimers formed by PDGFRA and PDGFRB. The heterodimer composed of PDGFA and PDGFB interacts with PDGFRB homodimers, and with heterodimers formed by PDGFRA and PDGFRB. Interacts with XLKD1. Interacts with LRP1. Interacts with SORL1 (via the N-terminal ectodomain). Interacts with CD82; this interaction inhibits PDGFB-mediated signaling pathway.

Its subcellular location is the secreted. Functionally, growth factor that plays an essential role in the regulation of embryonic development, cell proliferation, cell migration, survival and chemotaxis. Potent mitogen for cells of mesenchymal origin. Required for normal proliferation and recruitment of pericytes and vascular smooth muscle cells in the central nervous system, skin, lung, heart and placenta. Required for normal blood vessel development, and for normal development of kidney glomeruli. Plays an important role in wound healing. Signaling is modulated by the formation of heterodimers with PDGFA. This Canis lupus familiaris (Dog) protein is Platelet-derived growth factor subunit B (PDGFB).